Here is a 34-residue protein sequence, read N- to C-terminus: Beta/mu-theraphotoxin-Pe1b (34 aa).

3 disulfide bridges follow: Cys-2–Cys-16, Cys-9–Cys-21, and Cys-15–Cys-28.

The protein belongs to the neurotoxin 10 (Hwtx-1) family. 54 (ProTx-1) subfamily. As to expression, expressed by the venom gland.

Its subcellular location is the secreted. Functionally, ion channel impairing toxin that inhibits several voltage-gated sodium channels. It acts by inhibiting the inward component of the sodium current and by shifting the voltage dependence of channel activation to more depolarized potentials. Its most potent activity is on Nav1.7/SCN9A (IC(50)=167 nM), followed by Nav1.6/SCN8A (IC(50)=696 nM), and Nav1.2/SCN2A (IC(50)=3.54 uM). This chain is Beta/mu-theraphotoxin-Pe1b, found in Phormingochilus everetti (Malaysian purple earth tiger tarantula).